Reading from the N-terminus, the 746-residue chain is MLNPINKTIELGDGRTITIETGKLAKQADGAVTVRMNNTVLLATVCAAKDANPGVDFMPLQVEYKEKYSAFGRFPGGFTKREGKASDYEILTSRLVDRALRPLFPDNYHAEVYVNIILFSADGEDLPDALAGLAASAALAVSDIPFNGPISEVRVARTDGKYIVNPTSAELEKADIDIMVAATIDNIMMVEGEMNEVQESEMLEAIKVAHEAIKVQCKAQLELSEACGKLVKREYCHEVNDDELRKDVHDKCYAKAYAVATSGSGKHERSEAFEKIVEEYKAQFSEEELTDEKLEMIGRYYHDVEKEAMRRAILDEGKRLDGRKTTEIRPIWIETDCLPGPHGSAIFTRGETQSLSTVTLGTKSDEKMIDDVLNHGYERFLLHYNFPPFSTGEAKATRGVGRREIGHGNLAHRALKRMIPDNYPYVVRVISDILESNGSSSMATVCAGTLALRDAGVPMKKPVSGIAMGLISENKGTNYAILSDILGDEDHLGDMDFKVTGTKDGITATQMDIKVDGLSYEILENALAQAKEGRMHILGKILEAQPEAREDLKPHAPRIETMIIGKEFIGAVIGPGGKIIQGIQEKTGATVSIDEVDGVGKIEISGTNKATIDAAVKAIKAIVAVPEIGEVYEGKISSIMPYGAFVEFMPGKDGLLHISEIDWKRLETVEQAGLKEGDTVSVKLVDIDPKTGKFKLSRKVLLPKPEGYEERPPRPERGERGPRQDRGDRGPRQDRGDRGPRREYRD.

Residues Asp-490 and Asp-496 each coordinate Mg(2+). Positions 557–619 (PRIETMIIGK…ATIDAAVKAI (63 aa)) constitute a KH domain. The S1 motif domain maps to 629–699 (GEVYEGKISS…KTGKFKLSRK (71 aa)). Residues 701–746 (LLPKPEGYEERPPRPERGERGPRQDRGDRGPRQDRGDRGPRREYRD) form a disordered region. Residues 706 to 746 (EGYEERPPRPERGERGPRQDRGDRGPRQDRGDRGPRREYRD) are compositionally biased toward basic and acidic residues.

It belongs to the polyribonucleotide nucleotidyltransferase family. Mg(2+) is required as a cofactor.

It is found in the cytoplasm. It carries out the reaction RNA(n+1) + phosphate = RNA(n) + a ribonucleoside 5'-diphosphate. In terms of biological role, involved in mRNA degradation. Catalyzes the phosphorolysis of single-stranded polyribonucleotides processively in the 3'- to 5'-direction. This chain is Polyribonucleotide nucleotidyltransferase, found in Parabacteroides distasonis (strain ATCC 8503 / DSM 20701 / CIP 104284 / JCM 5825 / NCTC 11152).